Here is a 1444-residue protein sequence, read N- to C-terminus: Protein shortage in chiasmata 1 ortholog (1444 aa).

A compositionally biased stretch (low complexity) spans 1106–1117 (SITKSPQISSPQ). The interval 1106 to 1129 (SITKSPQISSPQENRNQISTLSSQ) is disordered.

Belongs to the XPF family. Highly divergent. As to quaternary structure, interacts with TEX11. Interacts with SPO16.

It localises to the chromosome. Functionally, ATPase required during meiosis for the formation of crossover recombination intermediates. Binds DNA: preferentially binds to single-stranded DNA and DNA branched structures. Does not show nuclease activity in vitro, but shows ATPase activity, which is stimulated by the presence of single-stranded DNA. Plays a key role in homologous recombination and crossing-over in meiotic prophase I in male and female germ cells. Required for proper synaptonemal complex assembly and homologous chromosome pairing. Requiref for recruitment TEX11 and MSH4 to recombination intermediates. The polypeptide is Protein shortage in chiasmata 1 ortholog (Homo sapiens (Human)).